A 157-amino-acid chain; its full sequence is Small ribosomal subunit protein uS7 (157 aa).

Belongs to the universal ribosomal protein uS7 family. In terms of assembly, part of the 30S ribosomal subunit. Contacts proteins S9 and S11.

In terms of biological role, one of the primary rRNA binding proteins, it binds directly to 16S rRNA where it nucleates assembly of the head domain of the 30S subunit. Is located at the subunit interface close to the decoding center, probably blocks exit of the E-site tRNA. The protein is Small ribosomal subunit protein uS7 of Chlamydia muridarum (strain MoPn / Nigg).